The following is a 695-amino-acid chain: Potassium voltage-gated channel subfamily KQT member 4 (695 aa).

The segment at 1 to 21 is disordered; that stretch reads MAEAPPRRLGLGPPPGDAPRA. Topologically, residues 1 to 96 are cytoplasmic; the sequence is MAEAPPRRLG…VYNVLERPRG (96 aa). An a 1,2-diacyl-sn-glycero-3-phospho-(1D-myo-inositol-4,5-bisphosphate)-binding site is contributed by R93. The helical transmembrane segment at 97-118 threads the bilayer; sequence WAFVYHVFIFLLVFSCLVLSVL. Residues 119-129 are Extracellular-facing; it reads STIQEHQELAN. Residues 130 to 152 traverse the membrane as a helical segment; it reads ECLLILEFVMIVVFGLEYIIRVW. Over 153–168 the chain is Cytoplasmic; it reads SAGCCCRYRGWQGRFR. Residues 169 to 191 traverse the membrane as a helical segment; it reads FARKPFCVIDFIVFVASVAVIAA. Residue K172 coordinates a 1,2-diacyl-sn-glycero-3-phospho-(1D-myo-inositol-4,5-bisphosphate). Residues 192 to 202 are Extracellular-facing; sequence GTQGNIFATSA. A helical; Voltage-sensor membrane pass occupies residues 203-223; that stretch reads LRSMRFLQILRMVRMDRRGGT. A 1,2-diacyl-sn-glycero-3-phospho-(1D-myo-inositol-4,5-bisphosphate) contacts are provided by R219, R220, K225, and S235. Topologically, residues 224-235 are cytoplasmic; the sequence is WKLLGSVVYAHS. A helical transmembrane segment spans residues 236–258; sequence KELITAWYIGFLVLIFASFLVYL. Over 259–270 the chain is Extracellular; the sequence is AEKDANSDFSSY. An intramembrane region (pore-forming) is located at residues 271–292; sequence ADSLWWGTITLTTIGYGDKTPH. Residue T293 is a topological domain, extracellular. A helical membrane pass occupies residues 294–322; sequence WLGRVLAAGFALLGISFFALPAGILGSGF. Topologically, residues 323 to 695 are cytoplasmic; that stretch reads ALKVQEQHRQ…ISRSVSTNMD (373 aa). 2 residues coordinate a 1,2-diacyl-sn-glycero-3-phospho-(1D-myo-inositol-4,5-bisphosphate): H330 and K333. Positions 342 to 351 are interaction with CALM; that stretch reads AANLIQAAWR. The disordered stretch occupies residues 441–483; it reads RMSSSQKRTGPSKQHLAPPPIPTSPSSEQVGEASSPSKVQKSW. Composition is skewed to polar residues over residues 442–452 and 464–483; these read MSSSQKRTGPS and SPSS…QKSW. Residues 535 to 549 form an interaction with CALM region; it reads RSVRILKFLVAKRKF. The interval 546–650 is C-terminal assembly domain (tetramerization); that stretch reads KRKFKETLRP…SRCLRSGTSA (105 aa). The tract at residues 588–608 is disordered; sequence GRGPGDRKTREKGDKGPSDTE. A compositionally biased stretch (basic and acidic residues) spans 591-605; that stretch reads PGDRKTREKGDKGPS.

It belongs to the potassium channel family. KQT (TC 1.A.1.15) subfamily. Kv7.4/KCNQ4 sub-subfamily. Homotetramer. Interacts (via C-terminus) with calmodulin; forms a heterooctameric structure (with 4:4 KCNQ1:CALM stoichiometry); the interaction is calcium-independent, constitutive, participates in the proper assembly of a functional channel. The interaction with calcium-free CALM controls channel trafficking whereas interaction with calcium-bound CALM regulates channel gating. May form a functional heteromultimeric channel with KCNQ3. Interacts with HSP90AB1; promotes cell surface expression of KCNQ4. Expressed in both the inner (IHCs) and the outer hair cells (OHCs) of the cochlea. Reciprocal longitudinal gradients of expression is present in IHCs and OHCs. The strongest expression in IHCs is in the base of the cochlea and in the apex for OHCs. A basal to apical gradient of expression is also present in both type I and type II spiral ganglion cells.

The protein resides in the basal cell membrane. The catalysed reaction is K(+)(in) = K(+)(out). Two molecules of phosphatidylinositol-4,5-bisphosphate (PIP2-I and PIP2-II) are essential to activate KCNQ4 channel by inducing the coupling of the voltage-sensing domain (VSD) and the pore-forming domain (PD). Upon channel activation, PIP2-I and PIP2-II disrupt the VSD-calmodulin/CALM interaction, causing the release of CALM from the VSD which triggers the opening of the gate. Calcium suppresses KCNQ4 channel current through calcium-bound CALM C-terminus. Therefore CALM acts as calcium sensor that controls channel activity. Functionally, pore-forming subunit of the voltage-gated potassium (Kv) channel involved in the regulation of sensory cells excitability in the cochlea. KCNQ4/Kv7.4 channel is composed of 4 pore-forming subunits assembled as tetramers. Promotes the outflow of potassium ions in the repolarization phase of action potential which plays a role in regulating membrane potential of excitable cells. The channel conducts a slowly activating and deactivating current. Current often shows some inward rectification at positive potentials. Channel may be selectively permeable in vitro to other cations besides potassium, in decreasing order of affinity K(+) = Rb(+) &gt; Cs(+) &gt; Na(+). Important for normal physiological function of inner ear such as sensory perception of sound. The protein is Potassium voltage-gated channel subfamily KQT member 4 of Rattus norvegicus (Rat).